The following is a 346-amino-acid chain: Uroporphyrinogen decarboxylase (346 aa).

Substrate is bound by residues 21–25 (RQAGR), D71, Y146, S201, and H316.

This sequence belongs to the uroporphyrinogen decarboxylase family. In terms of assembly, homodimer.

It is found in the cytoplasm. It carries out the reaction uroporphyrinogen III + 4 H(+) = coproporphyrinogen III + 4 CO2. It participates in porphyrin-containing compound metabolism; protoporphyrin-IX biosynthesis; coproporphyrinogen-III from 5-aminolevulinate: step 4/4. Catalyzes the decarboxylation of four acetate groups of uroporphyrinogen-III to yield coproporphyrinogen-III. This Rickettsia massiliae (strain Mtu5) protein is Uroporphyrinogen decarboxylase.